The primary structure comprises 375 residues: Terpene cyclase braA (375 aa).

Positions 116, 264, and 268 each coordinate Mg(2+). The short motif at 116–120 (DDEID) is the D(D/E)XX(D/E) motif element. The NSE motif motif lies at 264-272 (NDVLSLQKE). The WxxxxxRY motif motif lies at 348-355 (WSYSCERY). (2E,6E)-farnesyl diphosphate is bound by residues R354 and Y355.

The protein belongs to the terpene synthase family. As to quaternary structure, homodimer. It depends on Mg(2+) as a cofactor.

The enzyme catalyses (2E,6E)-farnesyl diphosphate + H2O = trichobrasilenol + diphosphate. Its pathway is secondary metabolite biosynthesis. Terpene cyclase; part of the gene cluster that mediates the biosynthesis of the brasilane terpene glycosides brasilane D and E. The biosynthesis starts with the activity of the terpene cyclase braA that converts farnesyl pyrophosphate into the sesquiterpene alcohol trichobrasilenol. Subsequently, trichobrasilenol is glycosylated by the O-glycosyltransferase braB putatively using UDP-GlcNAc as sugar donor to yield brasilane A. The latter then undergoes two rounds of oxidation performed by the cytochrome P450 monooxygenase braC. In the first round braC hydroxylates C-12 forming brasilane D, which serves as substrate in the second round to establish the epoxide at the bond between C-5 and C-10 and oxidize the alcohol at C-12 to an aldehyde leading to the final product brasilane E. In Annulohypoxylon truncatum (Hypoxylon truncatum), this protein is Terpene cyclase braA.